Reading from the N-terminus, the 269-residue chain is Cytochrome c oxidase subunit 3 (269 aa).

Residues Met-1–Trp-22 are Mitochondrial matrix-facing. The chain crosses the membrane as a helical span at residues Pro-23–Met-41. Residues His-42–His-48 lie on the Mitochondrial intermembrane side of the membrane. A helical membrane pass occupies residues Tyr-49–Gly-73. Residues Thr-74 to Thr-80 are Mitochondrial matrix-facing. A helical transmembrane segment spans residues Leu-81–Leu-114. Residues Thr-115 to Leu-137 are Mitochondrial intermembrane-facing. A helical transmembrane segment spans residues Pro-138–Lys-161. The Mitochondrial matrix portion of the chain corresponds to Gly-162–Arg-164. Residues Glu-165–Glu-188 form a helical membrane-spanning segment. At Tyr-189 to Phe-201 the chain is on the mitochondrial intermembrane side. A helical transmembrane segment spans residues Gly-202 to Ile-230. The Mitochondrial matrix segment spans residues Phe-231–Leu-248. Residues Tyr-249–Tyr-265 traverse the membrane as a helical segment. Topologically, residues Tyr-266–Ser-269 are mitochondrial intermembrane.

The protein belongs to the cytochrome c oxidase subunit 3 family. Component of the cytochrome c oxidase (complex IV, CIV), a multisubunit enzyme composed of 11 subunits. The complex is composed of a catalytic core of 3 subunits Cox1, Cox2 and Cox3, encoded in the mitochondrial DNA, and 8 supernumerary subunits Cox4, Cox5a/Cox5, Cox6, Cox7, Cox8, Cox7a/Cox9, Cox6b/Cox12 and Cox6a/Cox13, which are encoded in the nuclear genome. The complex exists as a monomer or a dimer and forms respiratory supercomplexes (SCs) in the inner mitochondrial membrane with NADH-ubiquinone oxidoreductase (complex I, CI) and ubiquinol-cytochrome c oxidoreductase (cytochrome b-c1 complex, complex III, CIII), resulting in various different assemblies (supercomplexes I(1)IV(1), I(1)III(3)IV(2), III(2)IV(1) and III(2)IV(2) as well as larger supercomplexes of compositions like I(1)III(2)IV(5-6)).

It is found in the mitochondrion inner membrane. The enzyme catalyses 4 Fe(II)-[cytochrome c] + O2 + 8 H(+)(in) = 4 Fe(III)-[cytochrome c] + 2 H2O + 4 H(+)(out). Its function is as follows. Component of the cytochrome c oxidase, the last enzyme in the mitochondrial electron transport chain which drives oxidative phosphorylation. The respiratory chain contains 3 multisubunit complexes succinate dehydrogenase (complex II, CII), ubiquinol-cytochrome c oxidoreductase (cytochrome b-c1 complex, complex III, CIII) and cytochrome c oxidase (complex IV, CIV), that cooperate to transfer electrons derived from NADH and succinate to molecular oxygen, creating an electrochemical gradient over the inner membrane that drives transmembrane transport and the ATP synthase. Cytochrome c oxidase is the component of the respiratory chain that catalyzes the reduction of oxygen to water. Electrons originating from reduced cytochrome c in the intermembrane space (IMS) are transferred via the dinuclear copper A center (CU(A)) of Cox2 and heme A of Cox1 to the active site in Cox1, a binuclear center (BNC) formed by heme A3 and copper B (CU(B)). The BNC reduces molecular oxygen to 2 water molecules using 4 electrons from cytochrome c in the IMS and 4 protons from the mitochondrial matrix. The protein is Cytochrome c oxidase subunit 3 (cox-3) of Neurospora crassa (strain ATCC 24698 / 74-OR23-1A / CBS 708.71 / DSM 1257 / FGSC 987).